Here is a 626-residue protein sequence, read N- to C-terminus: Chaperone protein HtpG (626 aa).

Positions 1–339 are a; substrate-binding; it reads MSQNQETRGF…SNDLPLNVSR (339 aa). Residues 340–555 form a b region; it reads EILQDNKITA…NDQMTTQMAK (216 aa). Positions 556–626 are c; that stretch reads LFAAAGQPVP…FIKRINKLLG (71 aa).

It belongs to the heat shock protein 90 family. As to quaternary structure, homodimer.

Its subcellular location is the cytoplasm. Molecular chaperone. Has ATPase activity. The protein is Chaperone protein HtpG of Haemophilus influenzae (strain 86-028NP).